A 20-amino-acid chain; its full sequence is Dihydroorotase-like protein (20 aa).

Belongs to the metallo-dependent hydrolases superfamily. DHOase family. PyrC' subfamily. Heterododecamer of 6 active PyrB subunits and 6 non-catalytic PyrC' subunits.

Its function is as follows. Non-functional DHOase. This Pseudomonas fluorescens biotype A protein is Dihydroorotase-like protein (pyrC').